The sequence spans 546 residues: E3 ubiquitin-protein ligase NEURL1B (546 aa).

Positions 38–194 (APRFHAQAKG…ITDEVQLLES (157 aa)) constitute an NHR 1 domain. Threonine 199 is modified (phosphothreonine). Residues 270 to 424 (ELRFHATRGP…GVAGQLRLLG (155 aa)) enclose the NHR 2 domain. The segment at 429–490 (SSETMTPSGS…FSAPEPTGSR (62 aa)) is disordered. Residues 457 to 471 (SSSASESSLVTAPSS) are compositionally biased toward low complexity. The segment at 494–534 (CTVCFDSEVDTVIYTCGHMCLCHGCGLRLRRQARACCPICR) adopts an RING-type zinc-finger fold.

Interacts with DLL1 and DLL4. Expressed in the limb buds and dorsal root ganglia. Expressed in brain and kidney and at low levels in the heart.

It localises to the cytoplasm. It catalyses the reaction S-ubiquitinyl-[E2 ubiquitin-conjugating enzyme]-L-cysteine + [acceptor protein]-L-lysine = [E2 ubiquitin-conjugating enzyme]-L-cysteine + N(6)-ubiquitinyl-[acceptor protein]-L-lysine.. The protein operates within protein modification; protein ubiquitination. Its function is as follows. E3 ubiquitin-protein ligase involved in regulation of the Notch pathway through influencing the stability and activity of several Notch ligands. This chain is E3 ubiquitin-protein ligase NEURL1B (Neurl1b), found in Mus musculus (Mouse).